The following is a 2713-amino-acid chain: MAAAAGGGSCPGPGSARGRFPGRPRGSGGGGGRGGRGNGAERVRVALRRGGGAAGPGGAEPGEDTALLRLLGLRRGLRRLRRLWAGARVQRGRGRGRGRGWGPNRGCMPEEESSDGESEEEEFQGFHSDEDVAPSSLRSALRSQRGRAPRGRGRKHKTTPLPPRLADVTPVPPKAPTRKRGEEGTERMVQALTELLRRSQAPQPPRSRARAREPSTPRRSRGRPPGRPAGPCRKKQQAVVLAEAAVTIPKPEPPPPVVPVKNKAGSWKCKEGPGPGPGTPKRGGQPGRGGRGGRGRGRGGLPLMIKFVSKAKKVKMGQLSQELESGQGHGQRGESWQDAPQRKDGDEPERGSCRKKQEQKLEEEEEEEEKEGEEKEEKDDNEDNNKQEEEEETERAVAEEEAMLAKEKEEAKLPSPPLTPPVPSPPPPLPPPSTSPPPPASPLPPPVSPPPPLSPPPYPAPEKQEESPPLVPATCSRKRGRPPLTPSQRAEREAARSGPEGTLSPTPNPSTTTGSPLEDSPTVVPKSTTFLKNIRQFIMPVVSARSSRVIKTPRRFMDEDPPKPPKVEASIVRPPVATSPPAPQEPVPVSSPPRVPTPPSTPVPLPEKRRSILREPTFRWTSLTRELPPPPPAPPPAPSPPPAPATPSRRPLLLRAPQFTPSEAHLKIYESVLTPPPLGALETPEPELPPADDSPAEPEPRAVGRTNHLSLPRFVPVVTSPVKVEVPPHGAPALSEGQQLQLQQPPQALQTQLLPQALPPQQPQAQPPPSPQHTPPLEKARVASLGSLPLSGVEEKMFSLLKRAKVQLFKIDQQQQQKVAASMPLSPAVQTEEAVGTVKQTPDRGCVRSEDESMEAKRDRASGPESPLQGPRIKHVCRHAAVALGQARAMVPEDVPRLSALPLRDRQDLATEDTSSASETESVPSRSQREKVESAGPGGDSEPTGSTGALAHTPRRSLPSHHGKKMRMARCGHCRGCLRVQDCGSCVNCLDKPKFGGPNTKKQCCVYRKCDKIEARKMERLAKKGRTIVKTLLPWDSDESPEASPGPPGPRRGAGAGGSREEVGATPGPEEQDSLLLQRKSARRCVKQRPSYDVFEDSDDSEPGGPPAPRRRTPREHELPVLEPEEQSRPRKPTLQPVLQLKARRRLDKDALAPGPFASFPNGWTGKQKSPDGVHRVRVDFKEDCDLENVWLMGGLSVLTSVPGGPPMVCLLCASKGLHELVFCQVCCDPFHPFCLEEAERPSPQHRDTWCCRRCKFCHVCGRKGRGSKHLLECERCRHAYHPACLGPSYPTRATRRRRHWICSACVRCKSCGATPGKNWDVEWSGDYSLCPRCTELYEKGNYCPICTRCYEDNDYESKMMQCAQCDHWVHAKCEGLSDEDYEILSGLPDSVLYTCGPCAGATQPRWREALSGALQGGLRQVLQGLLSSKVAGPLLLCTQCGQDGKQLHPGPCDLQAVGKRFEEGLYKSVHSFMEDVVAILMRHSEEGETPERRAGSQMKGLLLKLLESAFCWFDAHDPKYWRRSTRLPNGVLPNAVLPPSLDHVYAQWRQQESETPESGQPPGDPSAAFQSKDPAAFSHLDDPRQCALCLKYGDADSKEAGRLLYIGQNEWTHVNCAIWSAEVFEENDGSLKNVHAAVARGRQMRCELCLKPGATVGCCLSSCLSNFHFMCARASYCIFQDDKKVFCQKHTDLLDGKEIVTPDGFDVLRRVYVDFEGINFKRKFLTGLEPDVINVLIGSIRINSLGTLSDLSDCEGRLFPIGYQCSRLYWSTVDARRRCWYRCRILEYRPWGPREEPVHLEAAEENQTIVHSPTPSSDTDSLIPGDPVHHSPIQNLDPPLRTDSSNGPPPTPRSFSGARIKVPNYSPSRRPLGGVSFGPLPSPGSPSSLTHHIPTVGDSDFPAPPRRSRRPSPLATRPPPSRRTSSPLRTSPQLRVPLSTSVTALTPTSGELAPPDLAPSPLPPSEDLGPDFEDMEVVSGLSAADLDFAASLLGTEPFQEEIVAAGAVGSSQGGPGDSSEEEASPTTHYVHFPVTVVSGPALAPSSLAGAPRIEQLDGVDDGTDSEAEAVQQPRGQGTPPSGPGVGRGGVLGAAGDRAQPPEDLPSEIVDFVLKNLGGPGEGAAGPREDSLPSAPPLANGSQPPQSLSTSPADPTRTFAWLPGAPGVRVLSLGPAPEPPKPATSKIILVNKLGQVFVKMAGEGEPVAPPVKQPPLPPIIPPTAPTSWTLPPGPLLSVLPVVGVGVVRPAPPPPPPPLTLVFSSGPPSPPRQAIRVKRVSTFSGRSPPVPPPNKTPRLDEDGESLEDAHHVPGISGSGFSRVRMKTPTVRGVLDLNNPGEQPEEESPGRPQDRCPLLPLAEAPSQALDGSSDLLFESQWHHYSAGEASSSEEEPPSPEDKENQVPKRVGPHLRFEISSDDGFSVEAESLEVAWRTLIEKVQEARGHARLRHLSFSGMSGARLLGIHHDAVIFLAEQLPGAQRCQHYKFRYHQQGEGQEEPPLNPHGAARAEVYLRKCTFDMFNFLASQHRVLPEGATCDEEEDEVQLRSTRRATSLELPMAMRFRHLKKTSKEAVGVYRSAIHGRGLFCKRNIDAGEMVIEYSGIVIRSVLTDKREKFYDGKGIGCYMFRMDDFDVVDATMHGNAARFINHSCEPNCFSRVIHVEGQKHIVIFALRRILRGEELTYDYKFPIEDASNKLPCNCGAKRCRRFLN.

Residues 1 to 11 (MAAAAGGGSCP) show a composition bias toward gly residues. Disordered stretches follow at residues 1–65 (MAAA…GEDT), 82–524 (RLWA…PTVV), and 542–783 (VSAR…ARVA). Residue A2 is modified to N-acetylalanine. A compositionally biased stretch (low complexity) spans 12 to 24 (GPGSARGRFPGRP). The short motif at 17 to 36 (RGRFPGRPRGSGGGGGRGGR) is the Menin-binding motif (MBM) element. 2 stretches are compositionally biased toward gly residues: residues 25 to 38 (RGSG…GRGN) and 49 to 60 (RGGGAAGPGGAE). The segment at residues 37–44 (GNGAERVR) is a DNA-binding region (a.T hook 1). Residues 109–123 (PEEESSDGESEEEEF) are compositionally biased toward acidic residues. Positions 110–117 (EEESSDGE) form a DNA-binding region, a.T hook 2. Residues S113, S114, and S118 each carry the phosphoserine modification. The segment covering 144-158 (QRGRAPRGRGRKHKT) has biased composition (basic residues). Positions 340-360 (PQRKDGDEPERGSCRKKQEQK) are enriched in basic and acidic residues. A DNA-binding region (a.T hook 3) is located at residues 357-365 (QEQKLEEEE). Acidic residues predominate over residues 361–393 (LEEEEEEEEKEGEEKEEKDDNEDNNKQEEEEET). Residues 394–412 (ERAVAEEEAMLAKEKEEAK) show a composition bias toward basic and acidic residues. Pro residues predominate over residues 414–460 (PSPPLTPPVPSPPPPLPPPSTSPPPPASPLPPPVSPPPPLSPPPYPA). A compositionally biased stretch (low complexity) spans 501 to 517 (GTLSPTPNPSTTTGSPL). Over residues 555–566 (RFMDEDPPKPPK) the composition is skewed to basic and acidic residues. Positions 577–605 (ATSPPAPQEPVPVSSPPRVPTPPSTPVPL) are enriched in pro residues. The segment covering 606-617 (PEKRRSILREPT) has biased composition (basic and acidic residues). The segment covering 627-645 (LPPPPPAPPPAPSPPPAPA) has biased composition (pro residues). Composition is skewed to low complexity over residues 646 to 657 (TPSRRPLLLRAP), 715 to 728 (VPVV…EVPP), and 738 to 756 (QQLQ…LLPQ). The span at 757–774 (ALPPQQPQAQPPPSPQHT) shows a compositional bias: pro residues. K810 participates in a covalent cross-link: Glycyl lysine isopeptide (Lys-Gly) (interchain with G-Cter in SUMO2). Phosphoserine occurs at positions 826, 849, and 866. Disordered regions lie at residues 831-872 (TEEA…QGPR) and 899-964 (SALP…HHGK). A compositionally biased stretch (basic and acidic residues) spans 841–862 (TPDRGCVRSEDESMEAKRDRAS). Positions 912-922 (EDTSSASETES) are enriched in low complexity. Residue S941 is modified to Phosphoserine. Residues 953-964 (TPRRSLPSHHGK) show a composition bias toward basic residues. A CXXC-type zinc finger spans residues 964–1011 (KKMRMARCGHCRGCLRVQDCGSCVNCLDKPKFGGPNTKKQCCVYRKCD). Zn(2+)-binding residues include C971, C974, C977, C983, C986, C989, C1005, and C1010. Disordered regions lie at residues 1032–1076 (LLPW…DSLL) and 1088–1138 (QRPS…LQPV). S1037, S1040, S1098, and S1101 each carry phosphoserine. A Glycyl lysine isopeptide (Lys-Gly) (interchain with G-Cter in SUMO2) cross-link involves residue K1142. 3 consecutive PHD-type zinc fingers follow at residues 1207-1258 (PMVC…CKFC), 1255-1309 (CKFC…CVRC), and 1341-1402 (GNYC…CAGA). Residues 1410–1510 (ALSGALQGGL…GLLLKLLESA (101 aa)) enclose the Bromo domain. Positions 1550-1572 (RQQESETPESGQPPGDPSAAFQS) are disordered. The segment at 1584 to 1624 (PRQCALCLKYGDADSKEAGRLLYIGQNEWTHVNCAIWSAEV) adopts a C2HC pre-PHD-type zinc-finger fold. The segment at 1645 to 1692 (MRCELCLKPGATVGCCLSSCLSNFHFMCARASYCIFQDDKKVFCQKHT) adopts a PHD-type 4 zinc-finger fold. Positions 1733 to 1789 (VINVLIGSIRINSLGTLSDLSDCEGRLFPIGYQCSRLYWSTVDARRRCWYRCRILEY) constitute an FYR N-terminal domain. Positions 1808–1821 (QTIVHSPTPSSDTD) are enriched in polar residues. Disordered stretches follow at residues 1808-1973 (QTIV…GPDF), 2056-2104 (QLDG…PPED), 2116-2160 (NLGG…RTFA), 2279-2356 (VSTF…RCPL), and 2382-2408 (YSAG…PKRV). Low complexity-rich tracts occupy residues 1872 to 1890 (PLGG…PSSL) and 1923 to 1933 (RRTSSPLRTSP). Phosphoserine is present on residues S1926 and S1932. Polar residues predominate over residues 1939–1950 (LSTSVTALTPTS). Over residues 2058–2068 (DGVDDGTDSEA) the composition is skewed to acidic residues. Residues T2064 and T2079 each carry the phosphothreonine modification. Positions 2084-2093 (PGVGRGGVLG) are enriched in gly residues. Residues 2140–2153 (NGSQPPQSLSTSPA) show a composition bias toward polar residues. 2 positions are modified to phosphoserine: S2286 and S2346. Residues 2409–2490 (GPHLRFEISS…QRCQHYKFRY (82 aa)) enclose the FYR C-terminal domain. The WDR5 interaction motif (WIN) signature appears at 2506-2511 (GAARAE). In terms of domain architecture, SET spans 2573–2689 (EAVGVYRSAI…RGEELTYDYK (117 aa)). S-adenosyl-L-methionine-binding positions include H2583, R2585, Y2627, and 2650–2651 (NH). C2653 and C2701 together coordinate Zn(2+). The 17-residue stretch at 2697 to 2713 (NKLPCNCGAKRCRRFLN) folds into the Post-SET domain. N2702 lines the S-adenosyl-L-methionine pocket. C2703 and C2708 together coordinate Zn(2+).

This sequence belongs to the class V-like SAM-binding methyltransferase superfamily. Histone-lysine methyltransferase family. TRX/MLL subfamily. In terms of assembly, component of the menin-associated histone methyltransferase complex, at least composed of KMT2B/MLL4, ASH2L, RBBP5, WDR5, DPY30, MEN1; the complex interacts with POLR2A and POLR2B via MEN1. Interacts with NFE2. Interacts with KDM6B. Interacts (via WIN motif) with WDR5. Interacts (via MBM motif) with MEN1.

Its subcellular location is the nucleus. It carries out the reaction L-lysyl(4)-[histone H3] + S-adenosyl-L-methionine = N(6)-methyl-L-lysyl(4)-[histone H3] + S-adenosyl-L-homocysteine + H(+). The enzyme catalyses N(6)-methyl-L-lysyl(4)-[histone H3] + S-adenosyl-L-methionine = N(6),N(6)-dimethyl-L-lysyl(4)-[histone H3] + S-adenosyl-L-homocysteine + H(+). Its function is as follows. Histone methyltransferase that catalyzes methyl group transfer from S-adenosyl-L-methionine to the epsilon-amino group of 'Lys-4' of histone H3 (H3K4) via a non-processive mechanism. Part of chromatin remodeling machinery predominantly forms H3K4me1 and H3K4me2 methylation marks at active chromatin sites where transcription and DNA repair take place. Likely plays a redundant role with KMT2C in enriching H3K4me1 marks on primed and active enhancer elements. Plays a central role in beta-globin locus transcription regulation by being recruited by NFE2. Plays an important role in controlling bulk H3K4me during oocyte growth and preimplantation development. Required during the transcriptionally active period of oocyte growth for the establishment and/or maintenance of bulk H3K4 trimethylation (H3K4me3), global transcriptional silencing that preceeds resumption of meiosis, oocyte survival and normal zygotic genome activation. The polypeptide is Histone-lysine N-methyltransferase 2B (Kmt2b) (Mus musculus (Mouse)).